The sequence spans 388 residues: Chorismate synthase (388 aa).

Positions 39 and 45 each coordinate NADP(+). Residues 130–132 (RSS), 251–252 (NA), Gly296, 311–315 (KPIPT), and Arg337 each bind FMN.

The protein belongs to the chorismate synthase family. In terms of assembly, homotetramer. It depends on FMNH2 as a cofactor.

The enzyme catalyses 5-O-(1-carboxyvinyl)-3-phosphoshikimate = chorismate + phosphate. It participates in metabolic intermediate biosynthesis; chorismate biosynthesis; chorismate from D-erythrose 4-phosphate and phosphoenolpyruvate: step 7/7. In terms of biological role, catalyzes the anti-1,4-elimination of the C-3 phosphate and the C-6 proR hydrogen from 5-enolpyruvylshikimate-3-phosphate (EPSP) to yield chorismate, which is the branch point compound that serves as the starting substrate for the three terminal pathways of aromatic amino acid biosynthesis. This reaction introduces a second double bond into the aromatic ring system. This is Chorismate synthase from Geobacillus kaustophilus (strain HTA426).